The sequence spans 135 residues: Protein E6 (135 aa).

Zinc fingers lie at residues 11 to 47 and 83 to 119; these read CIWCKKGLDKVDAKRCHEKKIRIACRNGKHCAVCTSC and CMYCGGCLTRDEKERHRLFCEDFWIFRHQVRGRCYLC.

This sequence belongs to the papillomaviridae E6 protein family. In terms of assembly, forms homodimers. Interacts with ubiquitin-protein ligase UBE3A/E6-AP; this interaction stimulates UBE3A ubiquitin activity. Interacts with host BAK1.

It is found in the host cytoplasm. The protein localises to the host nucleus. Plays a major role in the induction and maintenance of cellular transformation. E6 associates with host UBE3A/E6-AP ubiquitin-protein ligase and modulates its activity. Protects host keratinocytes from apoptosis by mediating the degradation of host BAK1. May also inhibit host immune response. The polypeptide is Protein E6 (Cervus elaphus (Red deer)).